Consider the following 244-residue polypeptide: Ribosome-inactivating protein cucurmosin (244 aa).

Active-site residues include tyrosine 70, tyrosine 109, glutamate 158, and arginine 161. N-linked (GlcNAc...) asparagine glycosylation is found at asparagine 189 and asparagine 225.

It belongs to the ribosome-inactivating protein family. Type 1 RIP subfamily. In terms of processing, the N-linked glycan consists of GlcNAc2Man3Xyl.

It catalyses the reaction Endohydrolysis of the N-glycosidic bond at one specific adenosine on the 28S rRNA.. Functionally, has cytotoxic activity towards cancer cells, but not normal cells. Inhibits the growth of the human leukemia cell line K562, the murine melanoma cell line B16 and the lung adenocarcinoma cell line A549 with IC(50) values of 88.1 nM, 63.4 nM and 359.3 nM respectively. The polypeptide is Ribosome-inactivating protein cucurmosin (Cucurbita moschata (Winter crookneck squash)).